A 788-amino-acid chain; its full sequence is Multi-functional prenyltransferase ltmE (788 aa).

K18 and H51 together coordinate substrate. Residue D58 coordinates Mg(2+). Substrate is bound by residues R67, K151, T152, Q182, N189, and K199. Residues 283–337 (DTLDGDDLTRPSTITQHEQDDHVDRAAIDAKSDASGSSNKSLTPPETAPTTDTLS) form a disordered region. The span at 299-314 (HEQDDHVDRAAIDAKS) shows a compositional bias: basic and acidic residues. Residues 316 to 337 (ASGSSNKSLTPPETAPTTDTLS) are compositionally biased toward polar residues. 404-405 (MA) serves as a coordination point for L-tryptophan. Substrate contacts are provided by R427, R599, K601, Y603, and Y687.

The protein in the N-terminal section; belongs to the FPP/GGPP synthase family. In the C-terminal section; belongs to the tryptophan dimethylallyltransferase family. It depends on Mg(2+) as a cofactor.

The protein operates within secondary metabolite biosynthesis. Multi-functional prenyltransferase; part of the gene cluster that mediates the biosynthesis of lolitrems, indole-diterpene mycotoxins that are potent tremorgens in mammals, and are synthesized by clavicipitaceous fungal endophytes in association with their grass hosts. The geranylgeranyl diphosphate (GGPP) synthase ltmG is proposed to catalyze the first step in lolitrem biosynthesis. LtmG catalyzes a series of iterative condensations of isopentenyl diphosphate (IPP) with dimethylallyl diphosphate (DMAPP), geranyl diphosphate (GPP), and farnesyl diphosphate (FPP), to form GGPP. GGPP then condenses with indole-3-glycerol phosphate to form 3-geranylgeranylindole, an acyclic intermediate, to be incorporated into paxilline. Either ltmG or ltmC could be responsible for this step, as both are putative prenyl transferases. The FAD-dependent monooxygenase ltmM then catalyzes the epoxidation of the two terminal alkenes of the geranylgeranyl moiety, which is subsequently cyclized by ltmB, to paspaline. The cytochrome P450 monooxygenases ltmQ and ltmP can sequentially oxidize paspaline to terpendole E and terpendole F. Alternatively, ltmP converts paspaline to an intermediate which is oxidized by ltmQ to terpendole F. LtmF, ltmK, ltmE and ltmJ appear to be unique to the epichloe endophytes. The prenyltransferase ltmF is involved in the 27-hydroxyl-O-prenylation. The cytochrome P450 monooxygenase ltmK is required for the oxidative acetal ring formation. The multi-functional prenyltransferase ltmE is required for C20- and C21-prenylations of the indole ring of paspalanes and acts together with the cytochrome P450 monooxygenase ltmJ to yield lolitremanes by multiple oxidations and ring closures. The stereoisomer pairs of lolitriol and lolitrem N or lolitrem B and lolitrem F may be attributed to variations in the way in which ring closure can occur under the action of ltmJ. While the major product of this pathway is lolitrem B, the prenyl transferases and cytochrome P450 monooxygenases identified in this pathway have a remarkable versatility in their regio- and stereo-specificities to generate a diverse range of metabolites that are products of a metabolic grid rather than a linear pathway. This chain is Multi-functional prenyltransferase ltmE, found in Epichloe festucae var. lolii (Neotyphodium lolii).